A 421-amino-acid polypeptide reads, in one-letter code: Serine--tRNA ligase (421 aa).

Thr232–Glu234 contributes to the L-serine binding site. Arg262 to Glu264 contributes to the ATP binding site. Position 285 (Glu285) interacts with L-serine. Residue Glu349 to Ser352 participates in ATP binding. Ser384 contacts L-serine.

Belongs to the class-II aminoacyl-tRNA synthetase family. Type-1 seryl-tRNA synthetase subfamily. In terms of assembly, homodimer. The tRNA molecule binds across the dimer.

Its subcellular location is the cytoplasm. The catalysed reaction is tRNA(Ser) + L-serine + ATP = L-seryl-tRNA(Ser) + AMP + diphosphate + H(+). It catalyses the reaction tRNA(Sec) + L-serine + ATP = L-seryl-tRNA(Sec) + AMP + diphosphate + H(+). The protein operates within aminoacyl-tRNA biosynthesis; selenocysteinyl-tRNA(Sec) biosynthesis; L-seryl-tRNA(Sec) from L-serine and tRNA(Sec): step 1/1. In terms of biological role, catalyzes the attachment of serine to tRNA(Ser). Is also able to aminoacylate tRNA(Sec) with serine, to form the misacylated tRNA L-seryl-tRNA(Sec), which will be further converted into selenocysteinyl-tRNA(Sec). The sequence is that of Serine--tRNA ligase from Mycoplasma mobile (strain ATCC 43663 / 163K / NCTC 11711) (Mesomycoplasma mobile).